A 162-amino-acid chain; its full sequence is F protein (162 aa).

Residues 1-23 are disordered; the sequence is MSTNPKPQRKKPNVTPTVAHRTS. A compositionally biased stretch (polar residues) spans 14–23; it reads VTPTVAHRTS.

Its subcellular location is the host cytoplasm. The protein localises to the host perinuclear region. Functionally, contributes to the RIGI-mediated inhibition of type I interferon production. In Homo sapiens (Human), this protein is F protein.